A 104-amino-acid chain; its full sequence is L-rhamnose mutarotase (104 aa).

Residue Y18 participates in substrate binding. H22 serves as the catalytic Proton donor. Substrate is bound by residues Y41 and 76–77; that span reads WW.

This sequence belongs to the rhamnose mutarotase family. Homodimer.

Its subcellular location is the cytoplasm. It catalyses the reaction alpha-L-rhamnose = beta-L-rhamnose. It participates in carbohydrate metabolism; L-rhamnose metabolism. Its function is as follows. Involved in the anomeric conversion of L-rhamnose. The chain is L-rhamnose mutarotase from Bacteroides thetaiotaomicron (strain ATCC 29148 / DSM 2079 / JCM 5827 / CCUG 10774 / NCTC 10582 / VPI-5482 / E50).